Consider the following 135-residue polypeptide: Transcription antitermination protein NusB (135 aa).

This sequence belongs to the NusB family.

In terms of biological role, involved in transcription antitermination. Required for transcription of ribosomal RNA (rRNA) genes. Binds specifically to the boxA antiterminator sequence of the ribosomal RNA (rrn) operons. The protein is Transcription antitermination protein NusB of Lacticaseibacillus casei (strain BL23) (Lactobacillus casei).